The following is a 474-amino-acid chain: Hepatocyte nuclear factor 4-alpha (474 aa).

Positions Ser57 to Asn132 form a DNA-binding region, nuclear receptor. 2 NR C4-type zinc fingers span residues Cys60–Cys80 and Cys96–Cys120. Phosphoserine is present on residues Ser142 and Ser143. Tyr144 carries the post-translational modification Phosphotyrosine. Positions Ser147–Gly377 constitute an NR LBD domain. Residue Thr166 is modified to Phosphothreonine. At Ser167 the chain carries Phosphoserine. Residues Lys234 and Lys307 each participate in a glycyl lysine isopeptide (Lys-Gly) (interchain with G-Cter in ubiquitin) cross-link. A Phosphoserine; by AMPK modification is found at Ser313. The 9aaTAD motif lies at Asn368–Gly376. Positions Ser413–Pro450 are disordered. 2 positions are modified to phosphothreonine: Thr429 and Thr432. The residue at position 436 (Ser436) is a Phosphoserine. An N6-acetyllysine modification is found at Lys458.

This sequence belongs to the nuclear hormone receptor family. NR2 subfamily. In terms of assembly, homodimerization is required for HNF4-alpha to bind to its recognition site. Interacts with CLOCK, BMAL1 and PER1. Interacts with PER2. Interacts with CRY1 and CRY2. Interacts with NR0B2/SHP; the resulting heterodimer is transcriptionally inactive. Interacts with DDX3X; this interaction disrupts the interaction between HNF4 and NR0B2 that forms inactive heterodimers and enhances the formation of active HNF4 homodimers. In terms of processing, phosphorylated on tyrosine residue(s); phosphorylation is important for its DNA-binding activity. Phosphorylation may directly or indirectly play a regulatory role in the subnuclear distribution. Phosphorylation at Ser-313 by AMPK reduces the ability to form homodimers and bind DNA. Post-translationally, acetylation at Lys-458 lowers transcriptional activation by about two-fold. Expressed in the liver, pancreas and colon in a circadian manner.

It is found in the nucleus. Its function is as follows. Transcriptional regulator which controls the expression of hepatic genes during the transition of endodermal cells to hepatic progenitor cells, facilitatating the recruitment of RNA pol II to the promoters of target genes. Activates the transcription of CYP2C38. Represses the CLOCK-BMAL1 transcriptional activity and is essential for circadian rhythm maintenance and period regulation in the liver and colon cells. The polypeptide is Hepatocyte nuclear factor 4-alpha (Hnf4a) (Mus musculus (Mouse)).